Here is a 354-residue protein sequence, read N- to C-terminus: Guanine nucleotide-binding protein G(i) subunit alpha-1 (354 aa).

Residue glycine 2 is the site of N-myristoyl glycine attachment. Cysteine 3 carries the S-palmitoyl cysteine lipid modification. The region spanning 32 to 354 is the G-alpha domain; sequence REVKLLLLGA…KNNLKDCGLF (323 aa). The interval 35-48 is G1 motif; sequence KLLLLGAGESGKST. Residues 43–48, 150–151, and 175–178 contribute to the GTP site; these read ESGKST, DS, and LRTR. Serine 47 contributes to the Mg(2+) binding site. The G2 motif stretch occupies residues 173–181; sequence DVLRTRVKT. Threonine 181 provides a ligand contact to Mg(2+). The segment at 196 to 205 is G3 motif; sequence FKMFDVGGQR. GTP-binding positions include 200–204, 269–272, and alanine 326; these read DVGGQ and NKKD. Residues 265–272 form a G4 motif region; that stretch reads ILFLNKKD. Residues 324–329 form a G5 motif region; sequence TCATDT.

It belongs to the G-alpha family. G(i/o/t/z) subfamily. In terms of assembly, heterotrimeric G proteins are composed of 3 units; alpha, beta and gamma. The alpha chain contains the guanine nucleotide binding site. Part of a spindle orientation complex at least composed of GNAI1, GPSM2 and NUMA1. Identified in complex with the beta subunit GNB1 and the gamma subunit GNG1. Identified in complex with the beta subunit GNB1 and the gamma subunit GNG2. Component of the TAS2R14-GNAI1 complex, consisting of TAS2R14, GNAI1, GNB1 and GNG2; within the complex interacts with TAS2R14; this complex plays a role in the perception of bitterness. GTP binding causes dissociation of the heterotrimer, liberating the individual subunits so that they can interact with downstream effector proteins. Interacts (GDP-bound form) with GPSM1; this inhibits guanine nucleotide exchange and GTP binding. Interacts (GDP-bound form) with GPSM2 (via GoLoco domains); this inhibits guanine nucleotide exchange. Interacts with RGS10; this strongly enhances GTP hydrolysis. Interacts with RGS1 and RGS16; this strongly enhances GTPase activity. Interacts with RGS4. Interacts with RGS12. Interacts (via active GTP- or inactive GDP-bound forms) with RGS14 (via RGS and GoLoco domains). Interacts with RGS3, RGS6, RGS7, RGS8, RGS17, RGS18 and RGS20 (in vitro). Interacts (GDP-bound form) with RIC8A (via C-terminus); promoting GNAI1 folding and association with the plasma membrane. Interacts (inactive GDP-bound form) with NUCB1 (via GBA motif); the interaction leads to activation of GNAI1. Interacts (inactive GDP-bound form) with CCDC88C/DAPLE (via GBA motif); the interaction leads to activation of GNAI1. Interacts (inactive GDP-bound form) with CCDC8A/GIV (via GBA motif). Post-translationally, myristoylation at Gly-2 is required for membrane anchoring before palmitoylation. Palmitoylation at Cys-3 varies with membrane lipid composition.

It localises to the nucleus. The protein localises to the cytoplasm. Its subcellular location is the cell membrane. The protein resides in the cytoskeleton. It is found in the microtubule organizing center. It localises to the centrosome. The protein localises to the cell cortex. Its subcellular location is the membrane. The catalysed reaction is GTP + H2O = GDP + phosphate + H(+). Functionally, guanine nucleotide-binding proteins (G proteins) function as transducers downstream of G protein-coupled receptors (GPCRs) in numerous signaling cascades. The alpha chain contains the guanine nucleotide binding site and alternates between an active, GTP-bound state and an inactive, GDP-bound state. Signaling by an activated GPCR promotes GDP release and GTP binding. The alpha subunit has a low GTPase activity that converts bound GTP to GDP, thereby terminating the signal. Both GDP release and GTP hydrolysis are modulated by numerous regulatory proteins. Signaling is mediated via effector proteins, such as adenylate cyclase. Inhibits adenylate cyclase activity of ADCY1, ADCY5 and ADCY6, leading to decreased intracellular cAMP levels. The inactive GDP-bound form prevents the association of RGS14 with centrosomes and is required for the translocation of RGS14 from the cytoplasm to the plasma membrane. Required for normal cytokinesis during mitosis. Required for cortical dynein-dynactin complex recruitment during metaphase. The sequence is that of Guanine nucleotide-binding protein G(i) subunit alpha-1 (GNAI1) from Bos taurus (Bovine).